Here is a 462-residue protein sequence, read N- to C-terminus: A-type ATP synthase subunit B (462 aa).

This sequence belongs to the ATPase alpha/beta chains family. In terms of assembly, has multiple subunits with at least A(3), B(3), C, D, E, F, H, I and proteolipid K(x).

The protein localises to the cell membrane. Component of the A-type ATP synthase that produces ATP from ADP in the presence of a proton gradient across the membrane. The B chain is a regulatory subunit. This Methanococcus maripaludis (strain DSM 14266 / JCM 13030 / NBRC 101832 / S2 / LL) protein is A-type ATP synthase subunit B.